The chain runs to 495 residues: Leucine aminopeptidase 2 (495 aa).

An N-terminal signal peptide occupies residues 1–21; the sequence is MKSQLLSLAVAVSTISQGVVG. Positions 124-218 constitute a PA domain; the sequence is PPANKIMAEL…EDGKNLASLV (95 aa). Asparagine 142 and asparagine 235 each carry an N-linked (GlcNAc...) asparagine glycan. Residues histidine 259 and aspartate 271 each coordinate Zn(2+). N-linked (GlcNAc...) asparagine glycosylation is present at asparagine 272. Glutamate 303 functions as the Proton acceptor in the catalytic mechanism. Residues glutamate 304 and aspartate 332 each coordinate Zn(2+). The N-linked (GlcNAc...) asparagine glycan is linked to asparagine 352. Histidine 430 is a binding site for Zn(2+).

Belongs to the peptidase M28 family. M28A subfamily. As to quaternary structure, monomer. Zn(2+) is required as a cofactor.

It localises to the secreted. Its function is as follows. Extracellular aminopeptidase that releases a wide variety of amino acids from natural peptides and contributes to pathogenicity. This Trichophyton equinum (Horse ringworm fungus) protein is Leucine aminopeptidase 2 (LAP2).